A 471-amino-acid chain; its full sequence is 3-hydroxylaminophenol mutase (471 aa).

The GS beta-grasp domain occupies 15-100 (NDVKFVDFRF…TCDVVEPSDG (86 aa)). Positions 107–471 (PRSIAKRAEA…PVEFEMYYSL (365 aa)) constitute a GS catalytic domain.

Belongs to the glutamine synthetase family.

The enzyme catalyses 3-hydroxyaminophenol = aminohydroquinone. With respect to regulation, is inhibited by H(2)O(2). 1,10-phenanthroline inhibits the activity slightly, but other metal cation chelators such as EDTA or tiron have no effect on the activity. Divalent metal cations and hydroxylamine have also no effect on the activity. Due to the relationship of the protein with glutamine synthetases, glutamate and glutamine were tested as inhibitors; neither preincubation of the compounds with the enzyme nor their addition to the assay buffer affected 3HAP mutase activity. Catalyzes the isomerization of 3-hydroxylaminophenol (3HAP) to aminohydroquinone, a step in the degradative pathway of 3-nitrophenol. The enzymatic reaction is regiospecific since it leads to the formation of aminohydroquinone exclusively, without producing the isomeric 4-aminocatechol. Can also isomerize other hydroxylaminoaromatic compounds, such as hydroxylaminobenzene to a mixture of 2-aminophenol and 4-aminophenol, 4-hydroxylaminotoluene to 6-amino-m-cresol, and 2-chloro-5-hydroxylaminophenol to 2-amino-5-chlorohydroquinone. Does not act on 4-hydroxylaminobenzoate. This is 3-hydroxylaminophenol mutase from Cupriavidus pinatubonensis (strain JMP 134 / LMG 1197) (Cupriavidus necator (strain JMP 134)).